The primary structure comprises 170 residues: MKNFNGKLILIGLMGAGKTTLGRQMAQRLDYRFYDSDHEIAAAAGVPIPTIFEMEGEQGFRSRETAILKKLVILPHIVLSTGGGAVLKEENRALIRKSGTVVYLHAPPETLLERTRCDNSRPLLQVADPLAKLRELYAARDPVYRQTADFTVESANCRETVQTLLKRLSR.

Residue 15–20 participates in ATP binding; the sequence is GAGKTT. Residue Thr-19 coordinates Mg(2+). Substrate contacts are provided by Asp-37, Arg-61, and Gly-83. ATP is bound at residue Arg-121. Arg-140 lines the substrate pocket.

Belongs to the shikimate kinase family. Monomer. Mg(2+) serves as cofactor.

The protein resides in the cytoplasm. The catalysed reaction is shikimate + ATP = 3-phosphoshikimate + ADP + H(+). It functions in the pathway metabolic intermediate biosynthesis; chorismate biosynthesis; chorismate from D-erythrose 4-phosphate and phosphoenolpyruvate: step 5/7. Its function is as follows. Catalyzes the specific phosphorylation of the 3-hydroxyl group of shikimic acid using ATP as a cosubstrate. The chain is Shikimate kinase from Neisseria meningitidis serogroup C (strain 053442).